Reading from the N-terminus, the 464-residue chain is ESX-1 secretion system protein EccE1 (464 aa).

The next 2 helical transmembrane spans lie at 11–31 and 34–54; these read FTTG…AICM and DLLW…VLTI.

It belongs to the EccE family. Part of the ESX-1 / type VII secretion system (T7SS), which is composed of cytosolic and membrane components. The ESX-1 membrane complex is composed of EccB1, EccCa1, EccCb1, EccD1 and EccE1.

The protein localises to the cell inner membrane. Its function is as follows. Part of the ESX-1 / type VII specialized secretion system (T7SS), which exports several proteins including EsxA and EsxB. Plays a role in DNA conjugation, in at least a donor strain. This chain is ESX-1 secretion system protein EccE1, found in Mycolicibacterium smegmatis (strain ATCC 700084 / mc(2)155) (Mycobacterium smegmatis).